Reading from the N-terminus, the 166-residue chain is Large ribosomal subunit protein uL10 (166 aa).

The protein belongs to the universal ribosomal protein uL10 family. Part of the ribosomal stalk of the 50S ribosomal subunit. The N-terminus interacts with L11 and the large rRNA to form the base of the stalk. The C-terminus forms an elongated spine to which L12 dimers bind in a sequential fashion forming a multimeric L10(L12)X complex.

In terms of biological role, forms part of the ribosomal stalk, playing a central role in the interaction of the ribosome with GTP-bound translation factors. The protein is Large ribosomal subunit protein uL10 of Shewanella oneidensis (strain ATCC 700550 / JCM 31522 / CIP 106686 / LMG 19005 / NCIMB 14063 / MR-1).